We begin with the raw amino-acid sequence, 206 residues long: Protein Nef (206 aa).

G2 is lipidated: N-myristoyl glycine; by host. S6 bears the Phosphoserine; by host mark. The interval 62–65 (EEEK) is acidic; interacts with host PACS1 and PACS2; stabilizes the interaction of NEF/MHC-I with host AP1M1; necessary for MHC-I internalization. Positions 69–78 (PVTPQVPLRP) are SH3-binding; interaction with Src family tyrosine kinases. A PxxP; stabilizes the interaction of NEF/MHC-I with host AP1M1; necessary for MHC-I internalization motif is present at residues 72–75 (PQVP). Residues 108–124 (DILDLWIYHTQGYFPDW) are mediates dimerization, Nef-PTE1 interaction. Residues 148 to 180 (VEPDKVEEANKGENTSLLHPVSLHGMDDPEREV) form a binding to ATP6V1H region. A Dileucine internalization motif; necessary for CD4 internalization motif is present at residues 164-165 (LL). The Diacidic; necessary for CD4 internalization signature appears at 174–175 (DD).

Belongs to the lentivirus primate group Nef protein family. Monomer; cytosolic form. Homodimer; membrane bound form. Interacts with Nef associated p21-activated kinase (PAK2); this interaction activates PAK2. Associates with the Nef-MHC-I-AP1 complex; this complex is required for MHC-I internalization. Interacts (via C-terminus) with host PI3-kinase. Interacts with host PACS1; this interaction seems to be weak. Interacts with host PACS2. Interacts with host LCK and MAPK3; these interactions inhibit the kinase activity of the latter. Interacts with host ATP6V1H; this interaction may play a role in CD4 endocytosis. Associates with the CD4-Nef-AP2 complex; this complex is required for CD4 internalization. Interacts with host AP2 subunit alpha and AP2 subunit sigma2. Interacts with TCR-zeta chain; this interaction up-regulates the Fas ligand (FasL) surface expression. Interacts with host HCK, LYN, and SRC; these interactions activate the Src family kinases. Interacts with MAP3K5; this interaction inhibits the Fas and TNFR-mediated death signals. Interacts with beta-COP and PTE1. Interacts with human RACK1; this increases Nef phosphorylation by PKC. Interacts with TP53; this interaction decreases the half-life of TP53, protecting the infected cell against p53-mediated apoptosis. In terms of processing, the virion-associated Nef proteins are cleaved by the viral protease to release the soluble C-terminal core protein. Nef is probably cleaved concomitantly with viral structural proteins on maturation of virus particles. Myristoylated. Post-translationally, phosphorylated on serine residues, probably by host PKCdelta and theta.

The protein resides in the host cell membrane. The protein localises to the virion. Its subcellular location is the secreted. It localises to the host Golgi apparatus membrane. Its function is as follows. Factor of infectivity and pathogenicity, required for optimal virus replication. Alters numerous pathways of T-lymphocyte function and down-regulates immunity surface molecules in order to evade host defense and increase viral infectivity. Alters the functionality of other immunity cells, like dendritic cells, monocytes/macrophages and NK cells. In infected CD4(+) T-lymphocytes, down-regulates the surface MHC-I, mature MHC-II, CD4, CD28, CCR5 and CXCR4 molecules. Mediates internalization and degradation of host CD4 through the interaction of with the cytoplasmic tail of CD4, the recruitment of AP-2 (clathrin adapter protein complex 2), internalization through clathrin coated pits, and subsequent transport to endosomes and lysosomes for degradation. Diverts host MHC-I molecules to the trans-Golgi network-associated endosomal compartments by an endocytic pathway to finally target them for degradation. MHC-I down-regulation may involve AP-1 (clathrin adapter protein complex 1) or possibly Src family kinase-ZAP70/Syk-PI3K cascade recruited by PACS2. In consequence infected cells are masked for immune recognition by cytotoxic T-lymphocytes. Decreasing the number of immune receptors also prevents reinfection by more HIV particles (superinfection). Down-regulates host SERINC3 and SERINC5 thereby excluding these proteins from the viral particles. Virion infectivity is drastically higher when SERINC3 or SERINC5 are excluded from the viral envelope, because these host antiviral proteins impair the membrane fusion event necessary for subsequent virion penetration. In terms of biological role, bypasses host T-cell signaling by inducing a transcriptional program nearly identical to that of anti-CD3 cell activation. Interaction with TCR-zeta chain up-regulates the Fas ligand (FasL). Increasing surface FasL molecules and decreasing surface MHC-I molecules on infected CD4(+) cells send attacking cytotoxic CD8+ T-lymphocytes into apoptosis. Functionally, plays a role in optimizing the host cell environment for viral replication without causing cell death by apoptosis. Protects the infected cells from apoptosis in order to keep them alive until the next virus generation is ready to strike. Inhibits the Fas and TNFR-mediated death signals by blocking MAP3K5/ASK1. Decreases the half-life of TP53, protecting the infected cell against p53-mediated apoptosis. Inhibits the apoptotic signals regulated by the Bcl-2 family proteins through the formation of a Nef/PI3-kinase/PAK2 complex that leads to activation of PAK2 and induces phosphorylation of host BAD. Its function is as follows. Extracellular Nef protein targets CD4(+) T-lymphocytes for apoptosis by interacting with CXCR4 surface receptors. This chain is Protein Nef, found in Homo sapiens (Human).